The primary structure comprises 60 residues: UPF0434 protein Pnap_1922 (60 aa).

Belongs to the UPF0434 family.

This is UPF0434 protein Pnap_1922 from Polaromonas naphthalenivorans (strain CJ2).